Here is a 129-residue protein sequence, read N- to C-terminus: MARKTNTRKKRVKKNIEAGIAHIRSTFNNTIVTLTDTHGNALSWSSAGALGFRGSRKSTPFAAQMAAEAASKVAMEHGLKTLEVTVKGPGAGREAAIRALQAAGLEVTAIRDVTPVPHNGCRPPKRRRV.

Belongs to the universal ribosomal protein uS11 family. In terms of assembly, part of the 30S ribosomal subunit. Interacts with proteins S7 and S18. Binds to IF-3.

Located on the platform of the 30S subunit, it bridges several disparate RNA helices of the 16S rRNA. Forms part of the Shine-Dalgarno cleft in the 70S ribosome. This is Small ribosomal subunit protein uS11 from Bacillus mycoides (strain KBAB4) (Bacillus weihenstephanensis).